A 97-amino-acid polypeptide reads, in one-letter code: Small ribosomal subunit protein bS20 (97 aa).

A disordered region spans residues 1-22; sequence MANSKSALKRIRTSERNRLRNK.

It belongs to the bacterial ribosomal protein bS20 family.

Binds directly to 16S ribosomal RNA. This chain is Small ribosomal subunit protein bS20, found in Crocosphaera subtropica (strain ATCC 51142 / BH68) (Cyanothece sp. (strain ATCC 51142)).